A 104-amino-acid chain; its full sequence is uncharacterized protein (104 aa).

This is an uncharacterized protein from Archaeoglobus fulgidus (strain ATCC 49558 / DSM 4304 / JCM 9628 / NBRC 100126 / VC-16).